The sequence spans 571 residues: Folylpolyglutamate synthase (571 aa).

Residue Gly-122–Ser-125 coordinates ATP. Ser-146, Glu-215, and His-243 together coordinate Mg(2+). The ATP site is built by Arg-363 and Asp-385.

This sequence belongs to the folylpolyglutamate synthase family. A monovalent cation is required as a cofactor. As to expression, expressed in both shoots and roots, but expression in roots is higher compared with shoots. Distinct expression in the quiescent center (QC) region of the root tip. Also expressed in vascular tissues of the cotyledons and hypocotyls, and the first true leaves of 7 days old seedlings.

The protein resides in the plastid. It is found in the chloroplast. The catalysed reaction is (6S)-5,6,7,8-tetrahydrofolyl-(gamma-L-Glu)(n) + L-glutamate + ATP = (6S)-5,6,7,8-tetrahydrofolyl-(gamma-L-Glu)(n+1) + ADP + phosphate + H(+). Its pathway is cofactor biosynthesis; tetrahydrofolylpolyglutamate biosynthesis. Functionally, catalyzes conversion of folates to polyglutamate derivatives allowing concentration of folate compounds in the cell and the intracellular retention of these cofactors, which are important substrates for most of the folate-dependent enzymes that are involved in one-carbon transfer reactions involved in purine, pyrimidine and amino acid synthesis. Essential for organellar and whole-plant folate homeostasis. Required for postembryonic root development. Generates polyglutamylated folate cofactors to support C1 metabolism required for meristem maintenance and cell expansion during postembryonic root development. The polypeptide is Folylpolyglutamate synthase (Arabidopsis thaliana (Mouse-ear cress)).